A 251-amino-acid chain; its full sequence is Hydroxyacylglutathione hydrolase (251 aa).

Residues His53, His55, Asp57, His58, His110, Asp127, and His165 each contribute to the Zn(2+) site.

Belongs to the metallo-beta-lactamase superfamily. Glyoxalase II family. In terms of assembly, monomer. Requires Zn(2+) as cofactor.

The catalysed reaction is an S-(2-hydroxyacyl)glutathione + H2O = a 2-hydroxy carboxylate + glutathione + H(+). The protein operates within secondary metabolite metabolism; methylglyoxal degradation; (R)-lactate from methylglyoxal: step 2/2. Its function is as follows. Thiolesterase that catalyzes the hydrolysis of S-D-lactoyl-glutathione to form glutathione and D-lactic acid. The chain is Hydroxyacylglutathione hydrolase from Citrobacter koseri (strain ATCC BAA-895 / CDC 4225-83 / SGSC4696).